The sequence spans 420 residues: Acetylornithine aminotransferase (420 aa).

Pyridoxal 5'-phosphate is bound by residues 118–119 (GA) and Phe151. Residue Arg154 coordinates N(2)-acetyl-L-ornithine. Pyridoxal 5'-phosphate is bound at residue 242 to 245 (DEVQ). Residue Lys271 is modified to N6-(pyridoxal phosphate)lysine. Ser298 lines the N(2)-acetyl-L-ornithine pocket. Thr299 contributes to the pyridoxal 5'-phosphate binding site.

It belongs to the class-III pyridoxal-phosphate-dependent aminotransferase family. ArgD subfamily. As to quaternary structure, homodimer. Pyridoxal 5'-phosphate is required as a cofactor.

It is found in the cytoplasm. It catalyses the reaction N(2)-acetyl-L-ornithine + 2-oxoglutarate = N-acetyl-L-glutamate 5-semialdehyde + L-glutamate. It participates in amino-acid biosynthesis; L-arginine biosynthesis; N(2)-acetyl-L-ornithine from L-glutamate: step 4/4. This is Acetylornithine aminotransferase from Parasynechococcus marenigrum (strain WH8102).